Here is a 291-residue protein sequence, read N- to C-terminus: 2-dehydro-3-deoxyphosphooctonate aldolase 2 (291 aa).

An N-acetylalanine modification is found at Ala-2.

This sequence belongs to the KdsA family. As to expression, expressed in roots, apical meristem, emerging leaves, hydathodes of young leaves, styles of mature flowers and funicules of mature siliques.

It localises to the cytoplasm. It catalyses the reaction D-arabinose 5-phosphate + phosphoenolpyruvate + H2O = 3-deoxy-alpha-D-manno-2-octulosonate-8-phosphate + phosphate. In terms of biological role, catalyzes the stereospecific condensation of D-arabinose 5-phosphate and phosphoenolpyruvate to form 3-deoxy-D-manno-octulosonate 8-phosphate (KDO-8-phosphate) and inorganic phosphate. Involved in the biosynthesis of 3-deoxy-D-manno-octulosonate (KDO) which is an indispensable component of rhamnogalacturonan II (RG-II), a structurally complex pectic polysaccharide of the primary cell wall. RG-II is essential for the cell wall integrity of rapidly growing tissues and pollen tube growth and elongation. The polypeptide is 2-dehydro-3-deoxyphosphooctonate aldolase 2 (KDSA2) (Arabidopsis thaliana (Mouse-ear cress)).